We begin with the raw amino-acid sequence, 226 residues long: Pro-opiomelanocortin (226 aa).

Positions 1-22 (MVCAPWLLAVVVVCVCNPGVGG) are cleaved as a signal peptide. Residues 23-97 (QCWDSSHCKD…DPEPHSDKRH (75 aa)) constitute a propeptide that is removed on maturation. Ser-98 carries the post-translational modification N-acetylserine; in Corticotropin. Position 198 is an N-acetyltyrosine; in Beta-endorphin and Met-enkephalin (Tyr-198).

Belongs to the POMC family. In terms of processing, specific enzymatic cleavages at paired basic residues yield the different active peptides.

The protein resides in the secreted. Functionally, stimulates the adrenal glands to release cortisol. Anorexigenic peptide. Increases the pigmentation of skin by increasing melanin production in melanocytes. Its function is as follows. Increases the pigmentation of skin by increasing melanin production in melanocytes. In terms of biological role, endogenous orexigenic opiate. Functionally, endogenous opiate. This is Pro-opiomelanocortin (pomc) from Oncorhynchus keta (Chum salmon).